The following is a 213-amino-acid chain: Receptor-binding cancer antigen expressed on SiSo cells (213 aa).

Over 1–6 (MAITQF) the chain is Extracellular. A helical; Signal-anchor for type III membrane protein transmembrane segment spans residues 7–27 (RLFKFCTCLATVFSFLKRLIC). Residues 28–213 (RSGRGRKLSG…EQNKIGVKLS (186 aa)) are Cytoplasmic-facing. The residue at position 36 (Ser36) is a Phosphoserine. Thr41 is subject to Phosphothreonine. Tyr94 is modified (phosphotyrosine). The stretch at 163–211 (EDAAWQAEEVLRQQKLADREKRAAEQQRKKMEKEAQRLMKKEQNKIGVK) forms a coiled coil. Residues 178–206 (LADREKRAAEQQRKKMEKEAQRLMKKEQN) are compositionally biased toward basic and acidic residues. Residues 178–213 (LADREKRAAEQQRKKMEKEAQRLMKKEQNKIGVKLS) are disordered.

Homodimer. As to expression, widely expressed. Expressed in ovary, testis, prostate, thymus, muscle and heart, but not in small intestine, colon, lymph nodes, or peripherical blood lymphocytes. The protein is not detected in any of the above organs.

It is found in the golgi apparatus membrane. Functionally, may participate in suppression of cell proliferation and induces apoptotic cell death through activation of interleukin-1-beta converting enzyme (ICE)-like proteases. In Homo sapiens (Human), this protein is Receptor-binding cancer antigen expressed on SiSo cells (EBAG9).